Consider the following 291-residue polypeptide: Glycine--tRNA ligase alpha subunit (291 aa).

It belongs to the class-II aminoacyl-tRNA synthetase family. Tetramer of two alpha and two beta subunits.

The protein localises to the cytoplasm. The enzyme catalyses tRNA(Gly) + glycine + ATP = glycyl-tRNA(Gly) + AMP + diphosphate. This Geotalea uraniireducens (strain Rf4) (Geobacter uraniireducens) protein is Glycine--tRNA ligase alpha subunit.